Consider the following 375-residue polypeptide: tRNA-specific 2-thiouridylase MnmA (375 aa).

ATP-binding positions include alanine 20–serine 27 and leucine 46. Cysteine 114 serves as the catalytic Nucleophile. A disulfide bridge links cysteine 114 with cysteine 211. Glycine 138 provides a ligand contact to ATP. Positions arginine 160–glutamine 162 are interaction with tRNA. The active-site Cysteine persulfide intermediate is the cysteine 211.

The protein belongs to the MnmA/TRMU family.

The protein resides in the cytoplasm. The catalysed reaction is S-sulfanyl-L-cysteinyl-[protein] + uridine(34) in tRNA + AH2 + ATP = 2-thiouridine(34) in tRNA + L-cysteinyl-[protein] + A + AMP + diphosphate + H(+). Catalyzes the 2-thiolation of uridine at the wobble position (U34) of tRNA, leading to the formation of s(2)U34. This chain is tRNA-specific 2-thiouridylase MnmA, found in Ruegeria pomeroyi (strain ATCC 700808 / DSM 15171 / DSS-3) (Silicibacter pomeroyi).